The following is a 102-amino-acid chain: Large ribosomal subunit protein bL21 (102 aa).

Residues 79–91 (RKDSKRKKGHRQP) show a composition bias toward basic residues. The interval 79 to 102 (RKDSKRKKGHRQPYTKLTIDKINA) is disordered.

The protein belongs to the bacterial ribosomal protein bL21 family. Part of the 50S ribosomal subunit. Contacts protein L20.

Functionally, this protein binds to 23S rRNA in the presence of protein L20. This chain is Large ribosomal subunit protein bL21, found in Staphylococcus epidermidis (strain ATCC 35984 / DSM 28319 / BCRC 17069 / CCUG 31568 / BM 3577 / RP62A).